Here is a 225-residue protein sequence, read N- to C-terminus: PKHD-type hydroxylase YbiX (225 aa).

Residues 78–177 (TLSTPLFNRY…RVASFMWIQS (100 aa)) form the Fe2OG dioxygenase domain. Residues histidine 96, aspartate 98, and histidine 158 each coordinate Fe cation. Arginine 168 is a 2-oxoglutarate binding site.

Fe(2+) is required as a cofactor. The cofactor is L-ascorbate.

The polypeptide is PKHD-type hydroxylase YbiX (Escherichia coli O7:K1 (strain IAI39 / ExPEC)).